The chain runs to 230 residues: MAKKKSKKYLEAAKQVEEGKLYNASEAFGLVKKIDFANFDATIEVAFNLNVDTKQADQQLRGAMVLPNGTGKDQTVVVFAKGAKAQEAKDAGADVVGDDDLVARIQDGWLDFDVAIATPDMMAQVGRLGRVLGPKGLMPNPKTGTVTMDVTKAVTDAKSGQVTYRTDRDGNVHVPLGKVSFTEEALEGNFKAVYDVIAKARPASVKGVYIKHVSVASTFGPSVTLDTTAL.

It belongs to the universal ribosomal protein uL1 family. Part of the 50S ribosomal subunit.

Its function is as follows. Binds directly to 23S rRNA. The L1 stalk is quite mobile in the ribosome, and is involved in E site tRNA release. Protein L1 is also a translational repressor protein, it controls the translation of the L11 operon by binding to its mRNA. The protein is Large ribosomal subunit protein uL1 of Ligilactobacillus salivarius (strain UCC118) (Lactobacillus salivarius).